Consider the following 565-residue polypeptide: Peptide transport periplasmic protein SapA (565 aa).

A signal peptide spans 1-23; sequence MLRLNLRFLSFLLCIIQSVELQA.

This sequence belongs to the bacterial solute-binding protein 5 family.

The protein resides in the periplasm. Its function is as follows. Involved in a peptide intake transport system that plays a role in the resistance to antimicrobial peptides. The protein is Peptide transport periplasmic protein SapA (sapA) of Haemophilus influenzae (strain ATCC 51907 / DSM 11121 / KW20 / Rd).